The chain runs to 350 residues: UDP-N-acetylenolpyruvoylglucosamine reductase (350 aa).

The 172-residue stretch at 24–195 (HVDATARWLL…VAVEFNLPLL (172 aa)) folds into the FAD-binding PCMH-type domain. The active site involves Arg-172. Catalysis depends on Ser-245, which acts as the Proton donor. Glu-342 is an active-site residue.

The protein belongs to the MurB family. FAD is required as a cofactor.

Its subcellular location is the cytoplasm. It carries out the reaction UDP-N-acetyl-alpha-D-muramate + NADP(+) = UDP-N-acetyl-3-O-(1-carboxyvinyl)-alpha-D-glucosamine + NADPH + H(+). It participates in cell wall biogenesis; peptidoglycan biosynthesis. Functionally, cell wall formation. The protein is UDP-N-acetylenolpyruvoylglucosamine reductase of Xanthomonas campestris pv. campestris (strain B100).